The primary structure comprises 500 residues: NAD(P)H-quinone oxidoreductase chain 4, chloroplastic (500 aa).

14 helical membrane-spanning segments follow: residues 4–24, 37–57, 87–107, 113–130, 134–154, 167–187, 211–231, 242–262, 272–292, 313–333, 334–354, 386–406, 417–437, and 462–482; these read FPWL…IFFL, ISIC…HFQL, LGSI…AWPI, LFYF…GLFS, LLLF…LLSM, FILY…GMGL, ILLY…IPLH, HYST…YGLI, AHYL…IYAA, MGFI…GAIL, QILS…TASD, LALP…GLIT, LITF…LSML, and LFIL…PDFV.

The protein belongs to the complex I subunit 4 family.

Its subcellular location is the plastid. It is found in the chloroplast thylakoid membrane. The enzyme catalyses a plastoquinone + NADH + (n+1) H(+)(in) = a plastoquinol + NAD(+) + n H(+)(out). It carries out the reaction a plastoquinone + NADPH + (n+1) H(+)(in) = a plastoquinol + NADP(+) + n H(+)(out). The chain is NAD(P)H-quinone oxidoreductase chain 4, chloroplastic (ndhD) from Triticum aestivum (Wheat).